Consider the following 654-residue polypeptide: Fatty acid photodecarboxylase, chloroplastic (654 aa).

Residues 1 to 62 constitute a chloroplast transit peptide; sequence MASITSRASA…RRGGALSARA (62 aa). Residues 93–94, glutamate 114, leucine 162, serine 166, 170–173, and valine 298 each bind FAD; these read TA and NATL. Hexadecanoate-binding residues include cysteine 432, arginine 451, tyrosine 466, and glutamine 486. Glycine 622 contributes to the FAD binding site.

This sequence belongs to the GMC oxidoreductase family. FAD serves as cofactor.

It is found in the plastid. The protein resides in the chloroplast. It catalyses the reaction a long-chain fatty acid + hnu + H(+) = a long-chain alkane + CO2. The catalysed reaction is hnu + hexadecanoate + H(+) = pentadecane + CO2. The enzyme catalyses hnu + octadecanoate + H(+) = heptadecane + CO2. It carries out the reaction heptadecanoate + hnu + H(+) = hexadecane + CO2. It catalyses the reaction hnu + tetradecanoate + H(+) = tridecane + CO2. The catalysed reaction is octanoate + hnu + H(+) = heptane + CO2. Its activity is regulated as follows. Activated by blue light and repressed by red light. Its function is as follows. Catalyzes the decarboxylation of free fatty acids to n-alkanes or n-alkenes in response to blue light. Substrate preference is toward fatty acids with C16 or C17 chains. Converts n-octanoic acid (C8 chain) more efficiently than palmitate (n-hexadecanoic acid, C16 chain) into n-heptane (C7 chain) and n-pentadecane (C15 chain), respectively, partly due to an autocatalytic effect of its n-heptane product. Saturated fatty acids are converted to alkanes, not alkenes. The decarboxylation is initiated through electron abstraction from the fatty acid by the photo-excited FAD. The polypeptide is Fatty acid photodecarboxylase, chloroplastic (Chlorella variabilis (Green alga)).